Here is a 207-residue protein sequence, read N- to C-terminus: Uracil phosphoribosyltransferase (207 aa).

5-phospho-alpha-D-ribose 1-diphosphate contacts are provided by residues arginine 77, arginine 102, and 129-137 (DPMVATGGS). Residues isoleucine 192 and 197–199 (GDA) each bind uracil. Aspartate 198 contributes to the 5-phospho-alpha-D-ribose 1-diphosphate binding site.

The protein belongs to the UPRTase family. It depends on Mg(2+) as a cofactor.

It carries out the reaction UMP + diphosphate = 5-phospho-alpha-D-ribose 1-diphosphate + uracil. Its pathway is pyrimidine metabolism; UMP biosynthesis via salvage pathway; UMP from uracil: step 1/1. Its activity is regulated as follows. Allosterically activated by GTP. Its function is as follows. Catalyzes the conversion of uracil and 5-phospho-alpha-D-ribose 1-diphosphate (PRPP) to UMP and diphosphate. This Mycobacterium bovis (strain ATCC BAA-935 / AF2122/97) protein is Uracil phosphoribosyltransferase.